The primary structure comprises 288 residues: Protein sprouty homolog 3 (288 aa).

In terms of domain architecture, SPR spans 154 to 260; sequence KCVPCTAARP…GYDSLRRPGC (107 aa).

The protein belongs to the sprouty family. Interacts with TESK1. Interacts with USP11. Interacts with CAV1 (via C-terminus). Widely expressed; particularly in the fetal tissues. Expressed in the brain with expression the highest in Purkinje cells in the cerebellum (at protein level). Expressed in the myocardium of the heart.

Its subcellular location is the cytoplasm. Functionally, inhibits neurite branching, arbor length and neurite complexity. Inhibits EGF-mediated p42/44 ERK signaling. Negatively regulates the MAPK cascade, resulting in a reduction of extracellular matrix protein accumulation. May function as an antagonist of fibroblast growth factor (FGF) pathways and may negatively modulate respiratory organogenesis. This Homo sapiens (Human) protein is Protein sprouty homolog 3.